The following is a 173-amino-acid chain: Alpha-crystallin A chain (173 aa).

Residue Met1 is modified to N-acetylmethionine. The segment at 1 to 63 (MDVTIQHPWF…RTVLDSGISE (63 aa)) is required for complex formation with BFSP1 and BFSP2. Gln6 is modified (deamidated glutamine; partial). Ser45 carries the post-translational modification Phosphoserine. 2 positions are modified to deamidated glutamine; partial: Gln50 and Gln90. Residues 52–162 (LFRTVLDSGI…SHSERAIPVS (111 aa)) enclose the sHSP domain. The residue at position 99 (Lys99) is an N6-acetyllysine. A Zn(2+)-binding site is contributed by His100. Asn101 carries the post-translational modification Deamidated asparagine; partial. Positions 102 and 107 each coordinate Zn(2+). Position 122 is a phosphoserine (Ser122). Position 123 is a deamidated asparagine; partial (Asn123). Cys131 and Cys142 form a disulfide bridge. Deamidated glutamine; partial is present on Gln147. The interval 149–173 (GMDASHSERAIPVSREEKPSSAPSS) is disordered. Basic and acidic residues predominate over residues 153–167 (SHSERAIPVSREEKP). His154 is a binding site for Zn(2+). O-linked (GlcNAc) serine glycosylation occurs at Ser162.

The protein belongs to the small heat shock protein (HSP20) family. Heteromer composed of three CRYAA and one CRYAB subunits. Inter-subunit bridging via zinc ions enhances stability, which is crucial as there is no protein turn over in the lens. Can also form homodimers and homotetramers (dimers of dimers) which serve as the building blocks of homooligomers. Within homooligomers, the zinc-binding motif is created from residues of 3 different molecules. His-100 and Glu-102 from one molecule are ligands of the zinc ion, and His-107 and His-154 residues from additional molecules complete the site with tetrahedral coordination geometry. Part of a complex required for lens intermediate filament formation composed of BFSP1, BFSP2 and CRYAA. Undergoes age-dependent proteolytical cleavage at the C-terminus.

The protein resides in the cytoplasm. It is found in the nucleus. Its function is as follows. Contributes to the transparency and refractive index of the lens. In its oxidized form (absence of intramolecular disulfide bond), acts as a chaperone, preventing aggregation of various proteins under a wide range of stress conditions. Required for the correct formation of lens intermediate filaments as part of a complex composed of BFSP1, BFSP2 and CRYAA. This chain is Alpha-crystallin A chain (CRYAA), found in Loxodonta africana (African elephant).